The sequence spans 637 residues: 1-deoxy-D-xylulose-5-phosphate synthase (637 aa).

Residues H74 and 115 to 117 each bind thiamine diphosphate; that span reads GHS. Residue D146 participates in Mg(2+) binding. Thiamine diphosphate contacts are provided by residues 147-148, N175, Y285, and E366; that span reads GA. N175 contacts Mg(2+).

The protein belongs to the transketolase family. DXPS subfamily. In terms of assembly, homodimer. Mg(2+) is required as a cofactor. It depends on thiamine diphosphate as a cofactor.

The catalysed reaction is D-glyceraldehyde 3-phosphate + pyruvate + H(+) = 1-deoxy-D-xylulose 5-phosphate + CO2. It functions in the pathway metabolic intermediate biosynthesis; 1-deoxy-D-xylulose 5-phosphate biosynthesis; 1-deoxy-D-xylulose 5-phosphate from D-glyceraldehyde 3-phosphate and pyruvate: step 1/1. In terms of biological role, catalyzes the acyloin condensation reaction between C atoms 2 and 3 of pyruvate and glyceraldehyde 3-phosphate to yield 1-deoxy-D-xylulose-5-phosphate (DXP). This is 1-deoxy-D-xylulose-5-phosphate synthase from Pelotomaculum thermopropionicum (strain DSM 13744 / JCM 10971 / SI).